We begin with the raw amino-acid sequence, 460 residues long: Cysteine--tRNA ligase (460 aa).

Cysteine 29 is a Zn(2+) binding site. The 'HIGH' region signature appears at 31–41 (MTVYDYMHIGH). Zn(2+) contacts are provided by cysteine 210, histidine 235, and glutamate 239. Positions 267 to 271 (KMSKS) match the 'KMSKS' region motif. An ATP-binding site is contributed by lysine 270.

The protein belongs to the class-I aminoacyl-tRNA synthetase family. Monomer. Zn(2+) is required as a cofactor.

It is found in the cytoplasm. The catalysed reaction is tRNA(Cys) + L-cysteine + ATP = L-cysteinyl-tRNA(Cys) + AMP + diphosphate. The sequence is that of Cysteine--tRNA ligase from Coxiella burnetii (strain RSA 493 / Nine Mile phase I).